Here is a 145-residue protein sequence, read N- to C-terminus: Lysozyme C (145 aa).

The first 19 residues, 1-19 (MLFFGFLLAFLSAVPGTEG), serve as a signal peptide directing secretion. The 126-residue stretch at 20-145 (EIIPRCELVK…RDLSSYVKGC (126 aa)) folds into the C-type lysozyme domain. Intrachain disulfides connect cysteine 25–cysteine 145, cysteine 49–cysteine 133, cysteine 82–cysteine 98, and cysteine 94–cysteine 112. Catalysis depends on residues glutamate 54 and aspartate 70.

Belongs to the glycosyl hydrolase 22 family. As to quaternary structure, monomer.

It localises to the secreted. The catalysed reaction is Hydrolysis of (1-&gt;4)-beta-linkages between N-acetylmuramic acid and N-acetyl-D-glucosamine residues in a peptidoglycan and between N-acetyl-D-glucosamine residues in chitodextrins.. Functionally, lysozymes have primarily a bacteriolytic function; those in tissues and body fluids are associated with the monocyte-macrophage system and enhance the activity of immunoagents. The polypeptide is Lysozyme C (LYZ) (Opisthocomus hoazin (Hoatzin)).